The following is a 112-amino-acid chain: Carboxysome shell protein CcmK4 (112 aa).

Positions 6–92 constitute a BMC domain; that stretch reads AVGSIETIGF…PHENVVAVLP (87 aa).

This sequence belongs to the bacterial microcompartments protein family. CcmK subfamily. Homohexamer. Interacts with full-length CcmM. Forms mixed heterohexamers with CcmK3, probably with 1:5 CcmK3:CcmK4 stoichiometry. Only very weak interactions with CcmK1 and CcmK2 were seen.

The protein localises to the carboxysome. Functionally, a probably minor shell protein component of the carboxysome, a polyhedral inclusion where RuBisCO (ribulose bisphosphate carboxylase, rbcL-rbcS) is sequestered. The central pore probably regulates metabolite flux, as might the gaps between assembled homohexamers. Homohexamers make sheets that probably form the facets of the polyhedral carboxysome. This subunit probably makes both homohexamers and heterohexamers with CcmK3. The protein is Carboxysome shell protein CcmK4 of Synechocystis sp. (strain ATCC 27184 / PCC 6803 / Kazusa).